A 626-amino-acid polypeptide reads, in one-letter code: Janus kinase and microtubule-interacting protein 1 (626 aa).

A mediates association with microtubules region spans residues 1–365; it reads MSKKGRSKGE…KIKNLTRENV (365 aa). 2 coiled-coil regions span residues 19 to 254 and 284 to 413; these read VQMA…REAE and ERDV…DDLS. Residues 365 to 626 are mediates interaction with TYK2 and GABBR1; the sequence is VEMKEKLSAQ…ILFEPKLKFM (262 aa). Serine 382 is subject to Phosphoserine. Residues 452–461 show a composition bias toward polar residues; that stretch reads ETLSETSCNT. The interval 452–480 is disordered; sequence ETLSETSCNTDRTDRAPATPEEDLDDTTT. Phosphothreonine is present on threonine 470. Residues 490–604 adopt a coiled-coil conformation; sequence QLTREYQALQ…EFRVLELEVR (115 aa).

The protein belongs to the JAKMIP family. As to quaternary structure, homodimer. Forms a complex with GABBR1 and KIF5B/kinesin-1. Interacts with JAK1 and TYK2. Post-translationally, phosphorylated.

The protein localises to the cytoplasm. It is found in the cytoskeleton. The protein resides in the membrane. Functionally, associates with microtubules and may play a role in the microtubule-dependent transport of the GABA-B receptor. May play a role in JAK1 signaling and regulate microtubule cytoskeleton rearrangements. This chain is Janus kinase and microtubule-interacting protein 1 (JAKMIP1), found in Bos taurus (Bovine).